The following is a 960-amino-acid chain: Endoplasmic reticulum aminopeptidase 2 (960 aa).

Residues 1 to 20 (MFHSSAMVNSHRKPMFNIHR) lie on the Cytoplasmic side of the membrane. Residues 21-40 (GFYCLTAILPQICICSQFSV) traverse the membrane as a helical; Signal-anchor for type II membrane protein segment. Over 41 to 960 (PSSYHFTEDP…TLRTWLMVNT (920 aa)) the chain is Lumenal. N-linked (GlcNAc...) asparagine glycosylation is found at Asn85 and Asn119. Glu200 contributes to the substrate binding site. An N-linked (GlcNAc...) asparagine glycan is attached at Asn219. 334-338 (GAMEN) serves as a coordination point for substrate. His370 contacts Zn(2+). The active-site Proton acceptor is Glu371. Zn(2+) contacts are provided by His374 and Glu393. N-linked (GlcNAc...) asparagine glycosylation is present at Asn405. Cysteines 421 and 460 form a disulfide. Asn650 carries N-linked (GlcNAc...) asparagine glycosylation. A disulfide bond links Cys759 and Cys766.

This sequence belongs to the peptidase M1 family. In terms of assembly, heterodimer with ERAP1. Zn(2+) is required as a cofactor. N-glycosylated. Ubiquitously expressed. Highly expressed in spleen and leukocytes.

It is found in the endoplasmic reticulum membrane. Its function is as follows. Aminopeptidase that plays a central role in peptide trimming, a step required for the generation of most HLA class I-binding peptides. Peptide trimming is essential to customize longer precursor peptides to fit them to the correct length required for presentation on MHC class I molecules. Preferentially hydrolyzes the basic residues Arg and Lys. The polypeptide is Endoplasmic reticulum aminopeptidase 2 (ERAP2) (Homo sapiens (Human)).